The following is a 224-amino-acid chain: Probable 2' cyclic ADP-D-ribose synthase BdTIR (224 aa).

One can recognise a TIR domain in the interval 51 to 178; that stretch reads SRYEVFINHR…RFKFALREAK (128 aa). Residues 60-65 and Gly-93 contribute to the NAD(+) site; that span reads RGVDTK. Glu-127 is a catalytic residue.

In terms of assembly, homodimer.

The enzyme catalyses NAD(+) + H2O = ADP-D-ribose + nicotinamide + H(+). It carries out the reaction NADP(+) + H2O = ADP-D-ribose 2'-phosphate + nicotinamide + H(+). It catalyses the reaction NAD(+) = 2'cADPR + nicotinamide + H(+). An NAD(+) hydrolase (NADase). Upon activation catalyzes cleavage of NAD(+) into ADP-D-ribose (ADPR) and nicotinamide; NAD(+) cleavage triggers a defense system that promotes cell death. In addition to ADPR, also generates a cyclization variant of cyclic ADPR termed v-cADPR (2'cADPR). Also hydrolyzes NADP(+), but not other NAD(+)-related molecules. v-cADPR activates ThsA, an NAD(+) hydrolase in B.cereus (AC J8G6Z1). Probably makes 2'cADPR; the cADPR made by this protein is bound by cmTad1 (AC P0DW61) and activates ThsA from B.cereus. Boiling cmTad1 bound to the cyclic nucleotide releases 2'cADPR, strongly suggesting it is the product of this protein. The sequence is that of Probable 2' cyclic ADP-D-ribose synthase BdTIR from Brachypodium distachyon (Purple false brome).